Consider the following 264-residue polypeptide: Catenin delta-2 (264 aa).

4 ARM repeats span residues 20-59, 64-104, 120-162, and 166-211; these read NKIK…NLVY, DDNK…NLSS, LTNA…NVSS, and EARR…NLSY. Residues 238–264 form a disordered region; it reads GKDAESSGCWGKKKKKKKSQDQWDGVG.

This sequence belongs to the beta-catenin family. In terms of assembly, binds to E-cadherin at a juxtamembrane site within the cytoplasmic domain. Binds to PSEN1. Interacts with ZBTB33. Interacts with ARHGEF28. Interacts (via the extreme C-terminus) with FRMPD2 (via the PDZ 2 domain). Interacts with PDZD2. Interacts with CDK5. Interacts with CTNBB1. Interacts with GSK3A and GSK3B. Interacts with DNM2. Interacts with CCDC85B. Post-translationally, O-glycosylated. Phosphorylated by CDK5. Phosphorylated by GSK3B. Predominantly expressed in brain; accumulates in cortical neurons (at protein level).

It localises to the nucleus. Its subcellular location is the cell junction. The protein localises to the adherens junction. The protein resides in the cell projection. It is found in the dendrite. It localises to the perikaryon. Its function is as follows. Has a critical role in neuronal development, particularly in the formation and/or maintenance of dendritic spines and synapses. Involved in the regulation of canonical Wnt signaling. It probably acts on beta-catenin turnover, facilitating beta-catenin interaction with GSK3B, phosphorylation, ubiquitination and degradation. May be involved in neuronal cell adhesion and tissue morphogenesis and integrity by regulating adhesion molecules. Functions as a transcriptional activator when bound to ZBTB33. In Rattus norvegicus (Rat), this protein is Catenin delta-2 (Ctnnd2).